A 1032-amino-acid polypeptide reads, in one-letter code: MPSAVGESKNFPNGSPLNKGVRAMKGWVKGAIVLAIALVGLEVIARIYVENLWFQELSFQSVFWKRVRWQGSIALITGFISWGFIVFQVKVTNRLIQEEAQLKGLAVAQAVYAPVPVAIGSRYLPMPAPPVGPKAHSRPLQLPVLLPLIIVLQLILISLVMYYVFITIQVWTPDYTLPNITPAVPQPFRLHFLFTSFSGMGSQLGVTALAGMLALIGVLRGPRLLPGLVFILSAVWGLLLSGNWFRLLLSVNSQPFNTIDPQFHHDISFYIFQIPLWQLLESWWRGLFLFSLLGVTLIILKSADSLSEGRFPGFSAAQLRHISALGAAVALTLGVEHWLKRYDYLFANHGVVYGANYTDIHWRLPVETGLAIFSMAIAIWLGWLSVKGWPRAKGTGAPQRRGQLPIIGLWLPVAVYLLILLLQNLGGWAIELLVVQPNQLTRERPYLARNIAATREAFNLQIIQPATLTGRGQLTPASLERNRLTLNNIRLWDPIPLLKTNRQLQQIRLYYKFSDADLDRYTIRVQKDDTQTISTAKQQTLIAPRELDYTAVPEKAQTWVNKHLVYTHGYGFTLSPVNLVDQGGLPYYFVKDIGTDENAGALRTSSELIRTSIPIGKPRIYFGEITDNYIMTNTAIPELDFPSGEANVYNFYDGRGGIFLNSPIRKLLFAVYLRDWQMLFTENFKPDTRVLFRRNINHRIRHIAPFLRFDRDPYLVTAKVKGEEHSTLYWLIDAYTTSNSYPYSDPGEGDANQPGRNFNYIRNSVKILVDAYNGDVRFFTIDKQDPLINAWQKIFPELFLPFSSMPSTLKSHIRYPVDMFSTQSERLLTYHMEDIDVFYNREDQWRIPQETYADEQQPIAPYYLIMKLAGIDAKEEEFVLSQVYTPNARNNLIALLFARCDEQNYGKLLLYTLPKERLVYGPEQIEALVNQDPVISERISLWNRRGSRAIQGNLLVIPIEESLLYVEPIYLEAEKNSLPTLARVVVVYGNQIAMAESLNEAIEAIFDPNPTGRNAIVRPLDDTVNDLNSELN.

9 helical membrane-spanning segments follow: residues 27–49, 69–87, 144–166, 197–219, 226–248, 283–300, 321–339, 364–386, and 406–428; these read WVKG…RIYV, WQGS…FIVF, VLLP…YVFI, FSGM…IGVL, PGLV…FRLL, WWRG…LIIL, HISA…EHWL, LPVE…WLSV, and IIGL…LGGW.

It belongs to the UPF0182 family.

Its subcellular location is the cell membrane. The chain is UPF0182 protein sll1060 from Synechocystis sp. (strain ATCC 27184 / PCC 6803 / Kazusa).